The sequence spans 214 residues: Thiamine-phosphate synthase (214 aa).

4-amino-2-methyl-5-(diphosphooxymethyl)pyrimidine is bound by residues 37–41 (QYREK) and Asn-73. Mg(2+) is bound by residues Asp-74 and Asp-93. Position 112 (Ser-112) interacts with 4-amino-2-methyl-5-(diphosphooxymethyl)pyrimidine. 139–141 (TIS) lines the 2-[(2R,5Z)-2-carboxy-4-methylthiazol-5(2H)-ylidene]ethyl phosphate pocket. Lys-142 contributes to the 4-amino-2-methyl-5-(diphosphooxymethyl)pyrimidine binding site. 2-[(2R,5Z)-2-carboxy-4-methylthiazol-5(2H)-ylidene]ethyl phosphate contacts are provided by residues Gly-171 and 191–192 (IS).

This sequence belongs to the thiamine-phosphate synthase family. The cofactor is Mg(2+).

The catalysed reaction is 2-[(2R,5Z)-2-carboxy-4-methylthiazol-5(2H)-ylidene]ethyl phosphate + 4-amino-2-methyl-5-(diphosphooxymethyl)pyrimidine + 2 H(+) = thiamine phosphate + CO2 + diphosphate. It carries out the reaction 2-(2-carboxy-4-methylthiazol-5-yl)ethyl phosphate + 4-amino-2-methyl-5-(diphosphooxymethyl)pyrimidine + 2 H(+) = thiamine phosphate + CO2 + diphosphate. The enzyme catalyses 4-methyl-5-(2-phosphooxyethyl)-thiazole + 4-amino-2-methyl-5-(diphosphooxymethyl)pyrimidine + H(+) = thiamine phosphate + diphosphate. It functions in the pathway cofactor biosynthesis; thiamine diphosphate biosynthesis; thiamine phosphate from 4-amino-2-methyl-5-diphosphomethylpyrimidine and 4-methyl-5-(2-phosphoethyl)-thiazole: step 1/1. Its function is as follows. Condenses 4-methyl-5-(beta-hydroxyethyl)thiazole monophosphate (THZ-P) and 2-methyl-4-amino-5-hydroxymethyl pyrimidine pyrophosphate (HMP-PP) to form thiamine monophosphate (TMP). The polypeptide is Thiamine-phosphate synthase (Listeria monocytogenes serotype 4a (strain HCC23)).